The sequence spans 117 residues: Holo-[acyl-carrier-protein] synthase (117 aa).

The Mg(2+) site is built by aspartate 8 and glutamate 58.

Belongs to the P-Pant transferase superfamily. AcpS family. Mg(2+) is required as a cofactor.

The protein localises to the cytoplasm. The catalysed reaction is apo-[ACP] + CoA = holo-[ACP] + adenosine 3',5'-bisphosphate + H(+). Transfers the 4'-phosphopantetheine moiety from coenzyme A to a Ser of acyl-carrier-protein. The chain is Holo-[acyl-carrier-protein] synthase from Shouchella clausii (strain KSM-K16) (Alkalihalobacillus clausii).